A 62-amino-acid chain; its full sequence is Photosystem II reaction center protein Z (62 aa).

2 helical membrane-spanning segments follow: residues 8–28 (ALIALVLFSFVMVIGVPVAYA) and 41–61 (YLGSAIWAILVVIVAILNFFV).

It belongs to the PsbZ family. In terms of assembly, PSII is composed of 1 copy each of membrane proteins PsbA, PsbB, PsbC, PsbD, PsbE, PsbF, PsbH, PsbI, PsbJ, PsbK, PsbL, PsbM, PsbT, PsbX, PsbY, PsbZ, Psb30/Ycf12, peripheral proteins PsbO, CyanoQ (PsbQ), PsbU, PsbV and a large number of cofactors. It forms dimeric complexes.

The protein localises to the cellular thylakoid membrane. Functionally, may control the interaction of photosystem II (PSII) cores with the light-harvesting antenna, regulates electron flow through the 2 photosystem reaction centers. PSII is a light-driven water plastoquinone oxidoreductase, using light energy to abstract electrons from H(2)O, generating a proton gradient subsequently used for ATP formation. The polypeptide is Photosystem II reaction center protein Z (Rippkaea orientalis (strain PCC 8801 / RF-1) (Cyanothece sp. (strain PCC 8801))).